A 481-amino-acid chain; its full sequence is MHDIKAIRDNPTAFDDAYTRRGLAPIAQSLIDKDDARRKAILASEQAQARRNAASKEIGDAKKAKDNVRAEALMAEVAELKTTMPALDAAVKDADAALKKALSEIPNLPLADVPEGKDEHDNEVRSHYGVKRSYAFTPKPHYELGEALKQMDFEAAAKLSGARFVVLKKGLARLERAIGQFFLDVHTEEHGYTEVNPPLLVRDEAMFGTAQLPKFEDDQFFVGNGNNVRRLQQEMRATIEADDVKNIPDMFVPKSKYDRLLENYLRLETEQIALELTRRWLIPTAEVPLTNLVRESILDEKELPLRMTALTQCFRAEAGAAGRDTRGMIRQHQFTKVELVSVTTPEQSKDEHERMLSCAEEVLRRLELHYRVMTLCTGDMGFASQKTYDIEVWMPGQGEGGAYREISSCSVCGDFQARRMDARSRGPDGKPRFVHTLNGSGTAVGRALIAVIENYQQEDGSIAVPTVLQRYMGGLKVISNG.

284-286 (TAE) contributes to the L-serine binding site. 315 to 317 (RAE) lines the ATP pocket. Position 338 (E338) interacts with L-serine. 405-408 (EISS) contributes to the ATP binding site. Residue S440 participates in L-serine binding.

It belongs to the class-II aminoacyl-tRNA synthetase family. Type-1 seryl-tRNA synthetase subfamily. As to quaternary structure, homodimer. The tRNA molecule binds across the dimer.

Its subcellular location is the cytoplasm. It carries out the reaction tRNA(Ser) + L-serine + ATP = L-seryl-tRNA(Ser) + AMP + diphosphate + H(+). The catalysed reaction is tRNA(Sec) + L-serine + ATP = L-seryl-tRNA(Sec) + AMP + diphosphate + H(+). Its pathway is aminoacyl-tRNA biosynthesis; selenocysteinyl-tRNA(Sec) biosynthesis; L-seryl-tRNA(Sec) from L-serine and tRNA(Sec): step 1/1. In terms of biological role, catalyzes the attachment of serine to tRNA(Ser). Is also able to aminoacylate tRNA(Sec) with serine, to form the misacylated tRNA L-seryl-tRNA(Sec), which will be further converted into selenocysteinyl-tRNA(Sec). In Rhodopseudomonas palustris (strain BisB18), this protein is Serine--tRNA ligase.